We begin with the raw amino-acid sequence, 232 residues long: Ion-translocating oxidoreductase complex subunit E (232 aa).

6 helical membrane-spanning segments follow: residues 18–38 (GLVQ…LTNA), 39–59 (LGLG…VSLV), 69–89 (IPVF…VINA), 93–113 (GLYL…VIIG), 128–148 (AFDG…LGAV), and 182–202 (SFLL…LIAG).

Belongs to the NqrDE/RnfAE family. The complex is composed of six subunits: RnfA, RnfB, RnfC, RnfD, RnfE and RnfG.

The protein localises to the cell inner membrane. Its function is as follows. Part of a membrane-bound complex that couples electron transfer with translocation of ions across the membrane. The sequence is that of Ion-translocating oxidoreductase complex subunit E from Shewanella amazonensis (strain ATCC BAA-1098 / SB2B).